The sequence spans 800 residues: Phenylalanine--tRNA ligase beta subunit (800 aa).

The region spanning 39–154 (TKDIKNLVVG…ESQVPGTDAL (116 aa)) is the tRNA-binding domain. Residues 408–483 (AFITPIDITA…RIYGYDDIPS (76 aa)) enclose the B5 domain. Mg(2+) is bound by residues Asp461, Asp467, Glu470, and Glu471. The FDX-ACB domain occupies 708 to 800 (PRFPGMSRDI…ALIEQGAVIR (93 aa)).

It belongs to the phenylalanyl-tRNA synthetase beta subunit family. Type 1 subfamily. Tetramer of two alpha and two beta subunits. The cofactor is Mg(2+).

The protein resides in the cytoplasm. It catalyses the reaction tRNA(Phe) + L-phenylalanine + ATP = L-phenylalanyl-tRNA(Phe) + AMP + diphosphate + H(+). In Staphylococcus aureus, this protein is Phenylalanine--tRNA ligase beta subunit.